Consider the following 143-residue polypeptide: Transcriptional regulator MraZ (143 aa).

SpoVT-AbrB domains lie at 5 to 47 and 76 to 119; these read TYTP…PRSE and TDEQ…DAQA.

It belongs to the MraZ family. As to quaternary structure, forms oligomers.

The protein resides in the cytoplasm. It localises to the nucleoid. This is Transcriptional regulator MraZ from Mycobacterium ulcerans (strain Agy99).